Here is a 99-residue protein sequence, read N- to C-terminus: Large ribosomal subunit protein eL21 (99 aa).

This sequence belongs to the eukaryotic ribosomal protein eL21 family.

This is Large ribosomal subunit protein eL21 from Methanocella arvoryzae (strain DSM 22066 / NBRC 105507 / MRE50).